Here is a 528-residue protein sequence, read N- to C-terminus: MGKTLADQITELANKSKVPDFDIEDEQVFEHDSNASGSEASDEDEALQAAHYVQVGRSKLRNKHNVLVEDSKYSGSKGSREALFNSSGEEDGSESDRRGSDSDGGSDSDSDAPEATLSSEQSADESARSDSDSGDSDSDSGSDAGEENSAVAEDADAKRERLSQLVRLETQQAMGKLNAAVQNDALKGYAIMEQSRFFEGAIDVRIKLQKAIAAANQLPLTKQSWESRLDAQDAELLESTCKLLHKVAGKCAELRTTFQNKERINQTEIDYQPSKKRSIDALAEQCHDLDSQLRDYRGAVLHMWSSKVAATSGKTALSSSKFKAINQPANVQVDNQLADMPRLVKRTQLNRRGVVPLGFEEDYKQKRLPLLDSNSAQDGGQEEDADVPANYDPRKKDNNAIDASENPYIFDDEDFYRVLLNDLVDKKILNAQQGSNVQVAIKARSQNKLKKNVDTKASKGRKLNYSVQEPIANYEAPINGGFKWSDEQIDEFFAGLLGQRVNFDERETSEAKDNEEEAIEHDDLRIFG.

2 disordered regions span residues 14–158 (NKSK…ADAK) and 372–401 (DSNSAQDGGQEEDADVPANYDPRKKDNNAI). Residues 132-146 (DSGDSDSDSGSDAGE) show a composition bias toward acidic residues.

It belongs to the AATF family.

Its subcellular location is the nucleus. It is found in the nucleolus. The polypeptide is Protein BFR2 (BFR2) (Eremothecium gossypii (strain ATCC 10895 / CBS 109.51 / FGSC 9923 / NRRL Y-1056) (Yeast)).